We begin with the raw amino-acid sequence, 434 residues long: 3-phosphoshikimate 1-carboxyvinyltransferase (434 aa).

The 3-phosphoshikimate site is built by Lys-22, Ser-23, and Arg-27. Residue Lys-22 coordinates phosphoenolpyruvate. Gly-93 and Arg-121 together coordinate phosphoenolpyruvate. 3-phosphoshikimate is bound by residues Ser-168, Ser-169, Gln-170, Ser-199, Asp-320, and Lys-347. Residue Gln-170 participates in phosphoenolpyruvate binding. Residue Asp-320 is the Proton acceptor of the active site. Phosphoenolpyruvate-binding residues include Arg-351, Arg-394, and Lys-419.

This sequence belongs to the EPSP synthase family. As to quaternary structure, monomer.

Its subcellular location is the cytoplasm. It catalyses the reaction 3-phosphoshikimate + phosphoenolpyruvate = 5-O-(1-carboxyvinyl)-3-phosphoshikimate + phosphate. Its pathway is metabolic intermediate biosynthesis; chorismate biosynthesis; chorismate from D-erythrose 4-phosphate and phosphoenolpyruvate: step 6/7. Catalyzes the transfer of the enolpyruvyl moiety of phosphoenolpyruvate (PEP) to the 5-hydroxyl of shikimate-3-phosphate (S3P) to produce enolpyruvyl shikimate-3-phosphate and inorganic phosphate. The protein is 3-phosphoshikimate 1-carboxyvinyltransferase of Burkholderia orbicola (strain MC0-3).